The primary structure comprises 1133 residues: uncharacterized protein (1133 aa).

Disordered stretches follow at residues 33–83, 305–629, 679–723, and 736–817; these read QFED…NSSS, PVSN…NSNS, GKLD…SVKR, and IESP…SEEV. Residues 39–83 show a composition bias toward low complexity; that stretch reads NNNNSNNNNNNNNSNNNNSNNNENINRKTGSTLLSSSTSQLNSSS. The NDT80 DNA-binding region spans 40 to 308; it reads NNNSNNNNNN…GHPTCNPVSN (269 aa). Positions 305–316 are enriched in polar residues; it reads PVSNNPSTPGTP. Over residues 317 to 384 the composition is skewed to low complexity; the sequence is ISNFDSSNNN…NNNSSGNSSS (68 aa). A compositionally biased stretch (polar residues) spans 401–417; sequence INSLSNHNSPHLTPIQY. Positions 418–452 are enriched in low complexity; it reads NNNNNNSNNNSNNNNNNNNNNNNSNNNNNNSNNNN. Residues 453–470 are compositionally biased toward polar residues; that stretch reads HQFQSNNRIFKGNLSNPF. 2 stretches are compositionally biased toward low complexity: residues 473–615 and 686–714; these read NYSQ…GNNS and NNSN…NNNN. A compositionally biased stretch (polar residues) spans 736-747; sequence IESPQSYISSPT. Pro residues predominate over residues 757–771; sequence QPQPQPQPQPQPQPQ. Residues 772–808 are compositionally biased toward low complexity; it reads PQSQSQSQSQSQSQSQSQSQSQSQPIQQIVQQQLSSP. The Peptidase S74 domain maps to 909 to 1020; the sequence is SDKRVKENVK…KKVDNVCMEL (112 aa). The helical transmembrane segment at 1055–1075 threads the bilayer; that stretch reads IFIGIGVFTLFVIFGLVAVSI. Positions 1107–1133 are disordered; it reads SGSNSCYDSSSNSAIDTTTSTGSGSIK.

It is found in the membrane. This is an uncharacterized protein from Dictyostelium discoideum (Social amoeba).